The primary structure comprises 426 residues: tRNA(Met) cytidine acetate ligase (426 aa).

ATP contacts are provided by residues 7–20 (VVEY…HLFH), Gly101, Asn168, and Arg193.

This sequence belongs to the TmcAL family.

It localises to the cytoplasm. The enzyme catalyses cytidine(34) in elongator tRNA(Met) + acetate + ATP = N(4)-acetylcytidine(34) in elongator tRNA(Met) + AMP + diphosphate. In terms of biological role, catalyzes the formation of N(4)-acetylcytidine (ac(4)C) at the wobble position of elongator tRNA(Met), using acetate and ATP as substrates. First activates an acetate ion to form acetyladenylate (Ac-AMP) and then transfers the acetyl group to tRNA to form ac(4)C34. The protein is tRNA(Met) cytidine acetate ligase of Kosmotoga olearia (strain ATCC BAA-1733 / DSM 21960 / TBF 19.5.1).